The primary structure comprises 120 residues: Large ribosomal subunit protein uL22 (120 aa).

Residues 1 to 20 (MFVNRRYTARGKNLPSSPKK) are disordered.

It belongs to the universal ribosomal protein uL22 family. In terms of assembly, part of the 50S ribosomal subunit.

Functionally, this protein binds specifically to 23S rRNA; its binding is stimulated by other ribosomal proteins, e.g. L4, L17, and L20. It is important during the early stages of 50S assembly. It makes multiple contacts with different domains of the 23S rRNA in the assembled 50S subunit and ribosome. The globular domain of the protein is located near the polypeptide exit tunnel on the outside of the subunit, while an extended beta-hairpin is found that lines the wall of the exit tunnel in the center of the 70S ribosome. The polypeptide is Large ribosomal subunit protein uL22 (Borrelia turicatae (strain 91E135)).